Here is an 823-residue protein sequence, read N- to C-terminus: Axial budding pattern protein 2 (823 aa).

Residues 1–22 (MTQLQISLLLTATISLLHLVVA) form the signal peptide. The Extracellular segment spans residues 23–508 (TPYEAYPIGK…SHNKKAVAIA (486 aa)). N-linked (GlcNAc...) asparagine glycans are attached at residues Asn41, Asn50, Asn96, Asn117, Asn163, Asn260, Asn266, Asn304, Asn324, Asn359, Asn382, Asn389, Asn403, Asn447, Asn451, and Asn495. The disordered stretch occupies residues 447–467 (NHSANATSTRSSHHSTSTSSY). Over residues 449–467 (SANATSTRSSHHSTSTSSY) the composition is skewed to low complexity. The helical transmembrane segment at 509–529 (CGVAIPLGVILVALICFLIFW) threads the bilayer. At 530–823 (RRRRENPDDE…DIHGRIPEML (294 aa)) the chain is on the cytoplasmic side. Disordered stretches follow at residues 539–576 (ENLP…ASSY) and 596–627 (HSAT…QSQS). 2 stretches are compositionally biased toward polar residues: residues 552-566 (NPAN…TPLN) and 614-626 (SGMN…FQSQ). A phosphoserine mark is found at Ser642, Ser673, and Ser676. 2 disordered regions span residues 700-734 (PEKE…VTPS) and 751-771 (DSQS…SSDD). A compositionally biased stretch (polar residues) spans 709 to 724 (DVTMSSLDPWNSNISP). Positions 760 to 769 (TPTTMSTSSS) are enriched in low complexity.

In terms of assembly, interacts with BEM1, BUD3, BUD4, BUD5, CDC24 and CDC42. O-glycosylated by PMT4 and N-glycosylated. O-glycosylation increases activity in daughter cells by enhancing stability and promoting localization to the plasma membrane. May also be O-glycosylated by PMT1 and PMT2.

It localises to the cell membrane. In terms of biological role, required for haploid cells axial budding pattern. Acts as an anchor to help direct new growth components and/or polarity establishment components like the BUD5 GTP/GDP exchange factor to localize at the cortical axial budding site. Regulates septin organization in late G1 independently of its role in polarity-axis determination. The sequence is that of Axial budding pattern protein 2 (AXL2) from Saccharomyces cerevisiae (strain ATCC 204508 / S288c) (Baker's yeast).